The primary structure comprises 745 residues: Isocitrate dehydrogenase [NADP] 2 (745 aa).

N87 and S89 together coordinate NADP(+). D-threo-isocitrate-binding residues include S134, N137, R141, R147, and K257. D352 is a Mg(2+) binding site. 2 residues coordinate D-threo-isocitrate: Y422 and R550. Positions 551 and 555 each coordinate Mg(2+). NADP(+) contacts are provided by G587, S588, A589, H592, R603, D605, and R652.

The protein belongs to the monomeric-type IDH family. May form homotrimers. Also forms homotetramers at low salt concentration, which are dissociated into homodimers, but not into monomers, at high salt concentration (1 M). Mg(2+) serves as cofactor.

It catalyses the reaction D-threo-isocitrate + NADP(+) = 2-oxoglutarate + CO2 + NADPH. Catalyzes the oxidative decarboxylation of isocitrate to 2-oxoglutarate and carbon dioxide with the concomitant reduction of NADP(+). Cannot use NAD(+). This Mycobacterium tuberculosis (strain ATCC 25618 / H37Rv) protein is Isocitrate dehydrogenase [NADP] 2.